The sequence spans 382 residues: Dual-specificity RNA methyltransferase RlmN (382 aa).

Glutamate 96 (proton acceptor) is an active-site residue. A Radical SAM core domain is found at 102-340; sequence QNGRGTLCVS…VTVRTTRGDD (239 aa). A disulfide bond links cysteine 109 and cysteine 345. Positions 116, 120, and 123 each coordinate [4Fe-4S] cluster. S-adenosyl-L-methionine contacts are provided by residues 170 to 171, serine 202, 224 to 226, and asparagine 302; these read GE and SLH. The active-site S-methylcysteine intermediate is cysteine 345.

The protein belongs to the radical SAM superfamily. RlmN family. The cofactor is [4Fe-4S] cluster.

The protein localises to the cytoplasm. The catalysed reaction is adenosine(2503) in 23S rRNA + 2 reduced [2Fe-2S]-[ferredoxin] + 2 S-adenosyl-L-methionine = 2-methyladenosine(2503) in 23S rRNA + 5'-deoxyadenosine + L-methionine + 2 oxidized [2Fe-2S]-[ferredoxin] + S-adenosyl-L-homocysteine. It catalyses the reaction adenosine(37) in tRNA + 2 reduced [2Fe-2S]-[ferredoxin] + 2 S-adenosyl-L-methionine = 2-methyladenosine(37) in tRNA + 5'-deoxyadenosine + L-methionine + 2 oxidized [2Fe-2S]-[ferredoxin] + S-adenosyl-L-homocysteine. In terms of biological role, specifically methylates position 2 of adenine 2503 in 23S rRNA and position 2 of adenine 37 in tRNAs. m2A2503 modification seems to play a crucial role in the proofreading step occurring at the peptidyl transferase center and thus would serve to optimize ribosomal fidelity. The polypeptide is Dual-specificity RNA methyltransferase RlmN (Ectopseudomonas mendocina (strain ymp) (Pseudomonas mendocina)).